The chain runs to 400 residues: Tryptophan synthase beta chain (400 aa).

Lysine 92 bears the N6-(pyridoxal phosphate)lysine mark.

This sequence belongs to the TrpB family. As to quaternary structure, tetramer of two alpha and two beta chains. It depends on pyridoxal 5'-phosphate as a cofactor.

The enzyme catalyses (1S,2R)-1-C-(indol-3-yl)glycerol 3-phosphate + L-serine = D-glyceraldehyde 3-phosphate + L-tryptophan + H2O. It functions in the pathway amino-acid biosynthesis; L-tryptophan biosynthesis; L-tryptophan from chorismate: step 5/5. Its function is as follows. The beta subunit is responsible for the synthesis of L-tryptophan from indole and L-serine. The protein is Tryptophan synthase beta chain of Neisseria meningitidis serogroup B (strain ATCC BAA-335 / MC58).